An 883-amino-acid polypeptide reads, in one-letter code: Glutamate receptor 2 (883 aa).

The signal sequence occupies residues 1–21; it reads MQKIMHISVLLSPVLWGLIFG. At 22-543 the chain is on the extracellular side; that stretch reads VSSNSIQIGG…GVFSFLDPLA (522 aa). A disulfide bridge links Cys-78 with Cys-330. 4 N-linked (GlcNAc...) asparagine glycosylation sites follow: Asn-256, Asn-370, Asn-406, and Asn-413. Positions 499, 501, and 506 each coordinate L-glutamate. The helical transmembrane segment at 544 to 564 threads the bilayer; that stretch reads YEIWMCIVFAYIGVSVVLFLV. Residues 565–591 lie on the Cytoplasmic side of the membrane; that stretch reads SRFSPYEWHTEEFEDGRETQSSESTNE. Residues 592–607 constitute an intramembrane region (helical; Pore-forming); sequence FGIFNSLWFSLGAFMQ. An intramembrane segment occupies 608 to 610; sequence QGC. Cys-610 carries S-palmitoyl cysteine lipidation. Residues 611–616 lie on the Cytoplasmic side of the membrane; the sequence is DISPRS. Residues 617–637 form a helical membrane-spanning segment; that stretch reads LSGRIVGGVWWFFTLIIISSY. Residues 638-812 lie on the Extracellular side of the membrane; it reads TANLAAFLTV…EKTSALSLSN (175 aa). Ser-675 and Thr-676 together coordinate L-glutamate. Ser-683 carries the phosphoserine; by PKC modification. Ser-717 bears the Phosphoserine; by PKG mark. Glu-726 lines the L-glutamate pocket. An intrachain disulfide couples Cys-739 to Cys-794. The helical transmembrane segment at 813 to 833 threads the bilayer; that stretch reads VAGVFYILVGGLGLAMLVALI. Over 834–883 the chain is Cytoplasmic; that stretch reads EFCYKSRAEAKRMKVAKNPQNINPSSSQNSQNFATYKEGYNVYGIESVKI. The S-palmitoyl cysteine moiety is linked to residue Cys-836. 2 positions are modified to phosphoserine: Ser-860 and Ser-863. The required for interaction with IQSEC1 stretch occupies residues 867 to 877; the sequence is ATYKEGYNVYG. Tyr-876 carries the post-translational modification Phosphotyrosine. Ser-880 bears the Phosphoserine mark.

The protein belongs to the glutamate-gated ion channel (TC 1.A.10.1) family. GRIA2 subfamily. Homotetramer or heterotetramer of pore-forming glutamate receptor subunits. Tetramers may be formed by the dimerization of dimers. May interact with MPP4. Forms a ternary complex with GRIP1 and CSPG4. Interacts with ATAD1 in an ATP-dependent manner. ATAD1-catalyzed ATP hydrolysis disrupts binding to ATAD1 and to GRIP1 and leads to AMPAR complex disassembly. Interacts with GRIP2. Interacts with GRIP1. Interacts with NSF via its C-terminus. Interacts with CACNG2, PICK1 and GRIP2. Interacts with GRIA1 and SYNDIG1. Part of a complex containing GRIA2, NSF and NAPA and/or NAPB. Interacts with SNX27 (via PDZ domain); the interaction is required for recycling to the plasma membrane when endocytosed and prevent degradation in lysosomes. Interacts with LRFN1. Found in a complex with GRIA1, GRIA3, GRIA4, CNIH2, CNIH3, CACNG2, CACNG3, CACNG4, CACNG5, CACNG7 and CACNG8. Interacts with CACNG5. Interacts with OLFM2. Interacts with AP4B1, AP4E1 and AP4M1; probably indirect it mediates the somatodendritic localization of GRIA2 in neurons. Forms a complex with GRIP1, NSG1 and STX12; controls the intracellular fate of AMPAR and the endosomal sorting of the GRIA2 subunit toward recycling and membrane targeting. Interacts with IQSEC1; the interaction is required for ARF6 activation. Interacts (heterotetramer form) with CNIH2 and CNIH3; this interaction promotes expression at the plasma membrane and extensively modulates their gating properties by slowing deactivation and desensitization kinetics. Post-translationally, palmitoylated. Depalmitoylated upon L-glutamate stimulation. Cys-610 palmitoylation leads to Golgi retention and decreased cell surface expression. In contrast, Cys-836 palmitoylation does not affect cell surface expression but regulates stimulation-dependent endocytosis. In terms of processing, phosphorylation at Tyr-876 is required for interaction with IQSEC1 and ARF6 activation, which in turn triggers AMPAR internalization for persistent synaptic depression. Ubiquitinated by RNF167, leading to its degradation. Post-translationally, N-glycosylated. In terms of tissue distribution, detected in forebrain. Detected in dendrites of neuronal cells. Expressed in the pyramidal cell layers of CA1 and CA3 and in the granule cell layer of the dentate gyrus.

It is found in the cell membrane. Its subcellular location is the postsynaptic cell membrane. The protein resides in the postsynaptic density membrane. It carries out the reaction Ca(2+)(in) = Ca(2+)(out). It catalyses the reaction Na(+)(in) = Na(+)(out). In terms of biological role, ionotropic glutamate receptor that functions as a ligand-gated cation channel, gated by L-glutamate and glutamatergic agonists such as alpha-amino-3-hydroxy-5-methyl-4-isoxazolepropionic acid (AMPA), quisqualic acid, and kainic acid. L-glutamate acts as an excitatory neurotransmitter at many synapses in the central nervous system and plays an important role in fast excitatory synaptic transmission. Binding of the excitatory neurotransmitter L-glutamate induces a conformation change, leading to the opening of the cation channel, and thereby converts the chemical signal to an electrical impulse upon entry of monovalent and divalent cations such as sodium and calcium. The receptor then desensitizes rapidly and enters in a transient inactive state, characterized by the presence of bound agonist. In the presence of CACNG4 or CACNG7 or CACNG8, shows resensitization which is characterized by a delayed accumulation of current flux upon continued application of L-glutamate. Through complex formation with NSG1, GRIP1 and STX12 controls the intracellular fate of AMPAR and the endosomal sorting of the GRIA2 subunit toward recycling and membrane targeting. In Rattus norvegicus (Rat), this protein is Glutamate receptor 2.